The chain runs to 1379 residues: DNA-directed RNA polymerase subunit beta (1379 aa).

Belongs to the RNA polymerase beta chain family. As to quaternary structure, the RNAP catalytic core consists of 2 alpha, 1 beta, 1 beta' and 1 omega subunit. When a sigma factor is associated with the core the holoenzyme is formed, which can initiate transcription.

It catalyses the reaction RNA(n) + a ribonucleoside 5'-triphosphate = RNA(n+1) + diphosphate. Functionally, DNA-dependent RNA polymerase catalyzes the transcription of DNA into RNA using the four ribonucleoside triphosphates as substrates. In Rhizobium johnstonii (strain DSM 114642 / LMG 32736 / 3841) (Rhizobium leguminosarum bv. viciae), this protein is DNA-directed RNA polymerase subunit beta.